The sequence spans 670 residues: Acetyl-coenzyme A synthetase (670 aa).

CoA is bound by residues 211-214 and Thr-329; that span reads RGGK. Residues 404 to 406, 428 to 433, Asp-519, and Arg-534 contribute to the ATP site; these read GEP and DTYWQT. Residue Ser-542 participates in CoA binding. Arg-545 serves as a coordination point for ATP. Arg-603 contacts CoA.

Belongs to the ATP-dependent AMP-binding enzyme family.

The enzyme catalyses acetate + ATP + CoA = acetyl-CoA + AMP + diphosphate. The protein is Acetyl-coenzyme A synthetase (facA) of Emericella nidulans (strain FGSC A4 / ATCC 38163 / CBS 112.46 / NRRL 194 / M139) (Aspergillus nidulans).